Here is a 570-residue protein sequence, read N- to C-terminus: Nucleoprotein (570 aa).

The segment at 54–241 (MRKEKRDDSD…IEPKKSAINI (188 aa)) is binding site for the cap structure m7GTP. Asp-390 and Glu-392 together coordinate Mn(2+). Zn(2+) is bound by residues Glu-400, Cys-507, His-510, and Cys-530. Asp-534 serves as a coordination point for Mn(2+).

The protein belongs to the arenaviridae nucleocapsid protein family. As to quaternary structure, homomultimerizes to form the nucleocapsid. Binds to viral genomic RNA. Interacts with glycoprotein G2. Interacts with protein Z; this interaction probably directs the encapsidated genome to budding sites. Interacts with protein L; this interaction does not interfere with Z-L interaction. Interacts with host IKBKE (via Protein kinase domain); the interaction inhibits IKBKE kinase activity.

Its subcellular location is the virion. It is found in the host cytoplasm. Functionally, encapsidates the genome, protecting it from nucleases. The encapsidated genomic RNA is termed the nucleocapsid (NC). Serves as template for viral transcription and replication. The increased presence of protein N in host cell does not seem to trigger the switch from transcription to replication as observed in other negative strain RNA viruses. Through the interaction with host IKBKE, strongly inhibits the phosphorylation and nuclear translocation of host IRF3, a protein involved in interferon activation pathway, leading to the inhibition of interferon-beta and IRF3-dependent promoters activation. Also encodes a functional 3'-5' exoribonuclease that degrades preferentially dsRNA substrates and thereby participates in the suppression of interferon induction. The protein is Nucleoprotein of Mopeia virus (MOPV).